Consider the following 207-residue polypeptide: Small ribosomal subunit protein uS4 (207 aa).

The region spanning 96–156 (SRLDNVVYRM…KKSHNQSRIY (61 aa)) is the S4 RNA-binding domain.

It belongs to the universal ribosomal protein uS4 family. Part of the 30S ribosomal subunit. Contacts protein S5. The interaction surface between S4 and S5 is involved in control of translational fidelity.

Its function is as follows. One of the primary rRNA binding proteins, it binds directly to 16S rRNA where it nucleates assembly of the body of the 30S subunit. With S5 and S12 plays an important role in translational accuracy. This Blochmanniella floridana protein is Small ribosomal subunit protein uS4.